We begin with the raw amino-acid sequence, 453 residues long: Tryptophan biosynthesis protein TrpCF (453 aa).

The interval 1–257 is indole-3-glycerol phosphate synthase; sequence MMQTVLAKIV…AAVRRVLLGE (257 aa). The tract at residues 258–453 is N-(5'-phosphoribosyl)anthranilate isomerase; the sequence is NKVCGLTRGQ…ASVFQTLRAY (196 aa).

The protein in the N-terminal section; belongs to the TrpC family. It in the C-terminal section; belongs to the TrpF family. As to quaternary structure, monomer.

The catalysed reaction is N-(5-phospho-beta-D-ribosyl)anthranilate = 1-(2-carboxyphenylamino)-1-deoxy-D-ribulose 5-phosphate. It catalyses the reaction 1-(2-carboxyphenylamino)-1-deoxy-D-ribulose 5-phosphate + H(+) = (1S,2R)-1-C-(indol-3-yl)glycerol 3-phosphate + CO2 + H2O. It participates in amino-acid biosynthesis; L-tryptophan biosynthesis; L-tryptophan from chorismate: step 3/5. Its pathway is amino-acid biosynthesis; L-tryptophan biosynthesis; L-tryptophan from chorismate: step 4/5. Bifunctional enzyme that catalyzes two sequential steps of tryptophan biosynthetic pathway. The first reaction is catalyzed by the isomerase, coded by the TrpF domain; the second reaction is catalyzed by the synthase, coded by the TrpC domain. The polypeptide is Tryptophan biosynthesis protein TrpCF (trpC) (Escherichia coli (strain K12)).